Reading from the N-terminus, the 338-residue chain is Tryptophan--tRNA ligase (338 aa).

ATP-binding positions include 11–13 (QPS) and 19–20 (GN). The 'HIGH' region signature appears at 12-20 (PSGELSIGN). Residue Asp-135 participates in L-tryptophan binding. ATP-binding positions include 147–149 (GSD), Val-189, and 198–202 (KMSKS). The 'KMSKS' region signature appears at 198-202 (KMSKS).

Belongs to the class-I aminoacyl-tRNA synthetase family. As to quaternary structure, homodimer.

The protein resides in the cytoplasm. The enzyme catalyses tRNA(Trp) + L-tryptophan + ATP = L-tryptophyl-tRNA(Trp) + AMP + diphosphate + H(+). Its function is as follows. Catalyzes the attachment of tryptophan to tRNA(Trp). In Vibrio vulnificus (strain CMCP6), this protein is Tryptophan--tRNA ligase.